The chain runs to 353 residues: Photosystem II protein D1 (353 aa).

T2 is subject to N-acetylthreonine. A Phosphothreonine modification is found at T2. The next 3 membrane-spanning stretches (helical) occupy residues 29 to 46, 118 to 133, and 142 to 156; these read YVGW…TAVS, HFFL…EWEL, and WIAV…AATA. Position 118 (H118) interacts with chlorophyll a. Y126 provides a ligand contact to pheophytin a. 2 residues coordinate [CaMn4O5] cluster: D170 and E189. Residues 197 to 218 traverse the membrane as a helical segment; sequence FHMLGVAGVFGGSLFSAMHGSL. H198 contacts chlorophyll a. A quinone-binding positions include H215 and 264-265; that span reads SF. H215 is a binding site for Fe cation. Residue H272 coordinates Fe cation. Residues 274 to 288 traverse the membrane as a helical segment; the sequence is FLAAWPVVGIWFTAL. The [CaMn4O5] cluster site is built by H332, E333, D342, and A344. The propeptide occupies 345–353; it reads SVEAPSING.

Belongs to the reaction center PufL/M/PsbA/D family. In terms of assembly, PSII is composed of 1 copy each of membrane proteins PsbA, PsbB, PsbC, PsbD, PsbE, PsbF, PsbH, PsbI, PsbJ, PsbK, PsbL, PsbM, PsbT, PsbX, PsbY, PsbZ, Psb30/Ycf12, at least 3 peripheral proteins of the oxygen-evolving complex and a large number of cofactors. It forms dimeric complexes. The D1/D2 heterodimer binds P680, chlorophylls that are the primary electron donor of PSII, and subsequent electron acceptors. It shares a non-heme iron and each subunit binds pheophytin, quinone, additional chlorophylls, carotenoids and lipids. D1 provides most of the ligands for the Mn4-Ca-O5 cluster of the oxygen-evolving complex (OEC). There is also a Cl(-1) ion associated with D1 and D2, which is required for oxygen evolution. The PSII complex binds additional chlorophylls, carotenoids and specific lipids. serves as cofactor. Tyr-161 forms a radical intermediate that is referred to as redox-active TyrZ, YZ or Y-Z. In terms of processing, C-terminally processed by CTPA; processing is essential to allow assembly of the oxygen-evolving complex and thus photosynthetic growth.

The protein localises to the plastid. It is found in the chloroplast thylakoid membrane. It carries out the reaction 2 a plastoquinone + 4 hnu + 2 H2O = 2 a plastoquinol + O2. In terms of biological role, photosystem II (PSII) is a light-driven water:plastoquinone oxidoreductase that uses light energy to abstract electrons from H(2)O, generating O(2) and a proton gradient subsequently used for ATP formation. It consists of a core antenna complex that captures photons, and an electron transfer chain that converts photonic excitation into a charge separation. The D1/D2 (PsbA/PsbD) reaction center heterodimer binds P680, the primary electron donor of PSII as well as several subsequent electron acceptors. This Tupiella akineta (Green alga) protein is Photosystem II protein D1.